The chain runs to 329 residues: Delta(7)-sterol 5(6)-desaturase erg32 (329 aa).

2 helical membrane passes run 67–87 (LFLI…SFAY) and 149–169 (FYLF…IYWI). The region spanning 156–281 (ALFLLFSDFL…FFTLFDRLCS (126 aa)) is the Fatty acid hydroxylase domain. The Histidine box-1 motif lies at 170–175 (HRALHH). The Histidine box-2 signature appears at 183–187 (HKLHH). The helical transmembrane segment at 210 to 230 (LPYHMFPFFFPLNKYVYLLLF) threads the bilayer. Residues 257-262 (HHAAHH) carry the Histidine box-3 motif.

It belongs to the sterol desaturase family. It depends on Fe cation as a cofactor.

It is found in the endoplasmic reticulum membrane. The protein localises to the golgi apparatus membrane. The catalysed reaction is episterol + 2 Fe(II)-[cytochrome b5] + O2 + 2 H(+) = 5-dehydroepisterol + 2 Fe(III)-[cytochrome b5] + 2 H2O. The protein operates within steroid metabolism; ergosterol biosynthesis. In terms of biological role, C-5 sterol desaturase; part of the third module of ergosterol biosynthesis pathway that includes by the late steps of the pathway. Erg31 and erg32 catalyze the introduction of a C-5 double bond in the B ring to produce 5-dehydroepisterol. The third module or late pathway involves the ergosterol synthesis itself through consecutive reactions that mainly occur in the endoplasmic reticulum (ER) membrane. Firstly, the squalene synthase erg9 catalyzes the condensation of 2 farnesyl pyrophosphate moieties to form squalene, which is the precursor of all steroids. Secondly, squalene is converted into lanosterol by the consecutive action of the squalene epoxidase erg1 and the lanosterol synthase erg7. The lanosterol 14-alpha-demethylase erg11/cyp1 catalyzes C14-demethylation of lanosterol to produce 4,4'-dimethyl cholesta-8,14,24-triene-3-beta-ol. In the next steps, a complex process involving various demethylation, reduction and desaturation reactions catalyzed by the C-14 reductase erg24 and the C-4 demethylation complex erg25-erg26-erg27 leads to the production of zymosterol. Erg28 likely functions in the C-4 demethylation complex reaction by tethering erg26 and Erg27 to the endoplasmic reticulum or to facilitate interaction between these proteins. Then, the sterol 24-C-methyltransferase erg6 catalyzes the methyl transfer from S-adenosyl-methionine to the C-24 of zymosterol to form fecosterol. The C-8 sterol isomerase erg2 catalyzes the reaction which results in unsaturation at C-7 in the B ring of sterols and thus converts fecosterol to episterol. The sterol-C5-desaturases erg31 and erg32 then catalyze the introduction of a C-5 double bond in the B ring to produce 5-dehydroepisterol. The C-22 sterol desaturase erg5 further converts 5-dehydroepisterol into ergosta-5,7,22,24(28)-tetraen-3beta-ol by forming the C-22(23) double bond in the sterol side chain. Finally, ergosta-5,7,22,24(28)-tetraen-3beta-ol is substrate of the C-24(28) sterol reductase erg4 to produce ergosterol. In the genus Schizosaccharomyces, a second route exists between lanosterol and fecosterol, via the methylation of lanosterol to eburicol by erg6, followed by C14-demethylation by erg11/cyp1 and C4-demethylation by the demethylation complex erg25-erg26-erg27. In Schizosaccharomyces pombe (strain 972 / ATCC 24843) (Fission yeast), this protein is Delta(7)-sterol 5(6)-desaturase erg32.